The sequence spans 281 residues: Histidine biosynthesis bifunctional protein hisIE, chloroplastic (281 aa).

Residues 1–50 (MAVSYNALAQSLARSSCFIPKPYSFRDTKLRSRSNVVFACNDNKNIALQA) constitute a chloroplast transit peptide. A phosphoribosyl-AMP cyclohydrolase region spans residues 51-178 (KVDNLLDRIK…NKLALTTLYS (128 aa)). The tract at residues 179-281 (LESIISKRKE…GIEEKQNRTK (103 aa)) is phosphoribosyl-ATP pyrophosphohydrolase.

The protein in the N-terminal section; belongs to the PRA-CH family. This sequence in the C-terminal section; belongs to the PRA-PH family. Ubiquitously expressed throughout development.

Its subcellular location is the plastid. The protein resides in the chloroplast. The catalysed reaction is 1-(5-phospho-beta-D-ribosyl)-ATP + H2O = 1-(5-phospho-beta-D-ribosyl)-5'-AMP + diphosphate + H(+). It carries out the reaction 1-(5-phospho-beta-D-ribosyl)-5'-AMP + H2O = 1-(5-phospho-beta-D-ribosyl)-5-[(5-phospho-beta-D-ribosylamino)methylideneamino]imidazole-4-carboxamide. Its pathway is amino-acid biosynthesis; L-histidine biosynthesis; L-histidine from 5-phospho-alpha-D-ribose 1-diphosphate: step 2/9. It functions in the pathway amino-acid biosynthesis; L-histidine biosynthesis; L-histidine from 5-phospho-alpha-D-ribose 1-diphosphate: step 3/9. This chain is Histidine biosynthesis bifunctional protein hisIE, chloroplastic (HISN2), found in Arabidopsis thaliana (Mouse-ear cress).